We begin with the raw amino-acid sequence, 103 residues long: Large ribosomal subunit protein bL21 (103 aa).

It belongs to the bacterial ribosomal protein bL21 family. In terms of assembly, part of the 50S ribosomal subunit. Contacts protein L20.

Functionally, this protein binds to 23S rRNA in the presence of protein L20. This is Large ribosomal subunit protein bL21 from Aliivibrio fischeri (strain ATCC 700601 / ES114) (Vibrio fischeri).